A 92-amino-acid chain; its full sequence is Elongation factor 1-beta (92 aa).

This sequence belongs to the EF-1-beta/EF-1-delta family.

Promotes the exchange of GDP for GTP in EF-1-alpha/GDP, thus allowing the regeneration of EF-1-alpha/GTP that could then be used to form the ternary complex EF-1-alpha/GTP/AAtRNA. In Hyperthermus butylicus (strain DSM 5456 / JCM 9403 / PLM1-5), this protein is Elongation factor 1-beta.